We begin with the raw amino-acid sequence, 416 residues long: 3-oxoacyl-[acyl-carrier-protein] synthase 1 (416 aa).

Residues 11 to 415 (FPSVVVTAVT…GHNVALAFGR (405 aa)) form the Ketosynthase family 3 (KS3) domain. Residues Cys171, His311, and His345 each act as for beta-ketoacyl synthase activity in the active site. His311 and His345 together coordinate substrate.

The protein belongs to the thiolase-like superfamily. Beta-ketoacyl-ACP synthases family.

Its subcellular location is the cytoplasm. The enzyme catalyses an ultra-long-chain mono-unsaturated fatty acyl-[ACP] + malonyl-[ACP] + H(+) = a 3-oxo-ultra-long-chain mono-unsaturated fatty acyl-[ACP] + holo-[ACP] + CO2. Its pathway is lipid metabolism; mycolic acid biosynthesis. Its function is as follows. Part of the mycobacterial fatty acid elongation system FAS-II, which is involved in mycolic acid biosynthesis. Catalyzes the elongation of long chain acyl-ACP substrates by the addition of two carbons from malonyl-ACP to an acyl acceptor. Involved in the initial extension of the mycolate chain and forms monounsaturated fatty acids that averaged 40 carbons in length. This chain is 3-oxoacyl-[acyl-carrier-protein] synthase 1 (kasA), found in Mycobacterium leprae (strain TN).